The following is a 73-amino-acid chain: Conotoxin reg3a (73 aa).

A signal peptide spans 1-20; that stretch reads MMSKLRVLLTICLLLFPLSA. A propeptide spanning residues 21–55 is cleaved from the precursor; sequence LPLDGDQPADQPAKRMWNGKLAARKPRFDKYDLVR. A 4-hydroxyproline mark is found at Pro59, Pro60, Pro65, and Pro70. Cysteine amide is present on Cys72.

Contains 3 disulfide bonds. As to expression, expressed by the venom duct.

It localises to the secreted. This Conus regius (Crown cone) protein is Conotoxin reg3a.